Reading from the N-terminus, the 152-residue chain is Natriuretic peptides A (152 aa).

The signal sequence occupies residues 1-24; sequence MGSSAITVSFLLFLAFQLPGQTGA. Propeptides lie at residues 25-122 and 92-102; these read NPVY…TAPR and EGGVLGRGPWE. Positions 58–101 are disordered; the sequence is PSQVLSEQNEEAGAPLSPLSEMPPWMGEVNPAQREGGVLGRGPW. Serine 128 is subject to Phosphoserine. An intrachain disulfide couples cysteine 129 to cysteine 145. Residues 146 to 150 form an important for degradation of atrial natriuretic peptide by IDE region; that stretch reads NSFRY.

Belongs to the natriuretic peptide family. Homodimer; disulfide-linked antiparallel dimer. The precursor molecule is proteolytically cleaved by CORIN at Arg-122 to produce the atrial natriuretic peptide. Undergoes further proteolytic cleavage by unknown proteases to give rise to long-acting natriuretic peptide, vessel dilator and kaliuretic peptide. Additional processing gives rise to the auriculin and atriopeptin peptides. In the kidneys, alternative processing by an unknown protease results in the peptide urodilatin. In terms of processing, cleavage by MME initiates degradation of the factor and thereby regulates its activity. Degradation by IDE results in reduced activation of NPR1 (in vitro). During IDE degradation, the resulting products can temporarily stimulate NPR2 to produce cGMP, before the fragments are completely degraded and inactivated by IDE (in vitro). Post-translationally, degraded by IDE. Phosphorylation on Ser-128 decreases vasorelaxant activity.

The protein localises to the secreted. Its subcellular location is the perikaryon. It is found in the cell projection. Hormone that plays a key role in mediating cardio-renal homeostasis, and is involved in vascular remodeling and regulating energy metabolism. Acts by specifically binding and stimulating NPR1 to produce cGMP, which in turn activates effector proteins, such as PRKG1, that drive various biological responses. Regulates vasodilation, natriuresis, diuresis and aldosterone synthesis and is therefore essential for regulating blood pressure, controlling the extracellular fluid volume and maintaining the fluid-electrolyte balance. Also involved in inhibiting cardiac remodeling and cardiac hypertrophy by inducing cardiomyocyte apoptosis and attenuating the growth of cardiomyocytes and fibroblasts. Plays a role in female pregnancy by promoting trophoblast invasion and spiral artery remodeling in uterus, and thus prevents pregnancy-induced hypertension. In adipose tissue, acts in various cGMP- and PKG-dependent pathways to regulate lipid metabolism and energy homeostasis. This includes up-regulating lipid metabolism and mitochondrial oxygen utilization by activating the AMP-activated protein kinase (AMPK), and increasing energy expenditure by acting via MAPK11 to promote the UCP1-dependent thermogenesis of brown adipose tissue. Binds the clearance receptor NPR3 which removes the hormone from circulation. Its function is as follows. May have a role in cardio-renal homeostasis through regulation of natriuresis, diuresis, vasodilation, and inhibiting aldosterone synthesis. In vitro, promotes the production of cGMP and induces vasodilation. May promote natriuresis, at least in part, by enhancing prostaglandin E2 synthesis resulting in the inhibition of renal Na+-K+-ATPase. However reports on the involvement of this peptide in mammal blood volume and blood pressure homeostasis are conflicting; according to a report, in vivo it is not sufficient to activate cGMP and does not inhibit collecting duct transport nor effect diuresis and natriuresis. Appears to bind to specific receptors that are distinct from the receptors bound by atrial natriuretic peptide and vessel dilator. Possibly enhances protein excretion in urine by decreasing proximal tubular protein reabsorption. Functionally, may have a role in cardio-renal homeostasis through regulation of natriuresis, diuresis, and vasodilation. In vitro, promotes the production of cGMP and induces vasodilation. May promote natriuresis, at least in part, by enhancing prostaglandin E2 synthesis resulting in the inhibition of renal Na+-K+-ATPase. However reports on the involvement of this peptide in mammal blood volume and blood pressure homeostasis are conflicting; according to a report it is not sufficient to activate cGMP and does not inhibit collecting duct transport nor effect diuresis and natriuresis. Appears to bind to specific receptors that are distinct from the receptors bound by the atrial natriuretic and long-acting natriuretic peptides. Possibly functions in protein excretion in urine by maintaining the integrity of the proximal tubules and enhancing protein excretion by decreasing proximal tubular protein reabsorption. In terms of biological role, may have a role in cardio-renal homeostasis through regulation of diuresis and inhibiting aldosterone synthesis. In vitro, promotes the production of cGMP and induces vasodilation. May promote natriuresis, at least in part, by enhancing prostaglandin E2 synthesis resulting in the inhibition of renal Na+-K+-ATPase. May have a role in potassium excretion but not sodium excretion (natriuresis). Possibly enhances protein excretion in urine by decreasing proximal tubular protein reabsorption. Hormone produced in the kidneys that appears to be important for maintaining cardio-renal homeostasis. Mediates vasodilation, natriuresis and diuresis primarily in the renal system, in order to maintain the extracellular fluid volume and control the fluid-electrolyte balance. Specifically binds and stimulates cGMP production by renal transmembrane receptors, likely NPR1. Urodilatin not ANP, may be the natriuretic peptide responsible for the regulation of sodium and water homeostasis in the kidney. Its function is as follows. May have a role in cardio-renal homeostasis through regulation of natriuresis and vasodilation. In vivo promotes natriuresis and in vitro, vasodilates renal artery strips. Functionally, may have a role in cardio-renal homeostasis through regulation of regulation of natriuresis and vasodilation. In vivo promotes natriuresis. In vitro, vasodilates intestinal smooth muscle but not smooth muscle strips. In terms of biological role, may have a role in cardio-renal homeostasis through regulation of natriuresis and vasodilation. In vivo promotes natriuresis. In vitro, selectively vasodilates intestinal and vascular smooth muscle strips. May have a role in cardio-renal homeostasis through regulation of natriuresis and vasodilation. In vivo promotes natriuresis. In vitro, selectively vasodilates intestinal smooth muscle but not vascular smooth muscle strips. In Bos taurus (Bovine), this protein is Natriuretic peptides A (NPPA).